Reading from the N-terminus, the 515-residue chain is ATP synthase subunit alpha (515 aa).

ATP is bound at residue 171–178 (GDRQTGKT).

This sequence belongs to the ATPase alpha/beta chains family. In terms of assembly, F-type ATPases have 2 components, CF(1) - the catalytic core - and CF(0) - the membrane proton channel. CF(1) has five subunits: alpha(3), beta(3), gamma(1), delta(1), epsilon(1). CF(0) has three main subunits: a(1), b(2) and c(9-12). The alpha and beta chains form an alternating ring which encloses part of the gamma chain. CF(1) is attached to CF(0) by a central stalk formed by the gamma and epsilon chains, while a peripheral stalk is formed by the delta and b chains.

It is found in the cell inner membrane. The enzyme catalyses ATP + H2O + 4 H(+)(in) = ADP + phosphate + 5 H(+)(out). Its function is as follows. Produces ATP from ADP in the presence of a proton gradient across the membrane. The alpha chain is a regulatory subunit. The protein is ATP synthase subunit alpha of Stenotrophomonas maltophilia (strain R551-3).